We begin with the raw amino-acid sequence, 386 residues long: Histidine decarboxylase (386 aa).

His120 is a substrate binding site. Lys233 is subject to N6-(pyridoxal phosphate)lysine.

It belongs to the group II decarboxylase family. In terms of assembly, homotetramer. It depends on pyridoxal 5'-phosphate as a cofactor.

It catalyses the reaction L-histidine + H(+) = histamine + CO2. The polypeptide is Histidine decarboxylase (Vibrio campbellii (strain ATCC BAA-1116)).